A 2213-amino-acid polypeptide reads, in one-letter code: Protein sidekick-1 (2213 aa).

Positions 1–73 (MARGARPSAA…GAGRCGGRRA (73 aa)) are disordered. A compositionally biased stretch (low complexity) spans 23-38 (AGPGRPRGSPPGRARP). 5 consecutive Ig-like C2-type domains span residues 104–186 (PYFK…SEVQ), 191–277 (GSFM…SPFI), 293–378 (PTIV…RATA), 386–476 (PYFT…LDVT), and 480–569 (PVFT…ATLT). C126 and C169 are joined by a disulfide. N271 and N301 each carry an N-linked (GlcNAc...) asparagine glycan. Intrachain disulfides connect C315-C362, C408-C458, and C501-C553. N550, N563, and N572 each carry an N-linked (GlcNAc...) asparagine glycan. The Ig-like C2-type 6 domain maps to 574 to 663 (TSIVHPPEDH…GNDSRMARLE (90 aa)). Residues C595 and C647 are joined by a disulfide bond. 7 N-linked (GlcNAc...) asparagine glycosylation sites follow: N655, N679, N782, N821, N882, N1015, and N1024. Fibronectin type-III domains are found at residues 670 to 766 (SPQN…LPEE), 771 to 867 (PPKN…TLQG), 872 to 970 (PPQN…TQED), 974 to 1068 (AVGH…VPPD), 1072 to 1171 (APSN…TLQA), 1176 to 1274 (APTS…TRES), 1279 to 1376 (APEN…TKDD), 1380 to 1474 (PPVR…TEKR), 1479 to 1576 (PPRE…TLQD), 1581 to 1699 (PPGS…VGEA), 1704 to 1800 (APQN…THQA), 1804 to 1899 (APSF…AGPA), and 1902 to 2000 (SPGS…SAQV). N-linked (GlcNAc...) asparagine glycans are attached at residues N1282 and N1333. N-linked (GlcNAc...) asparagine glycans are attached at residues N1654, N1748, N1767, N1819, and N1893. Residues 2010–2030 (FLLVMALSSLIVILLVVFALV) traverse the membrane as a helical segment. Residues 2031 to 2213 (LHGQNKKYKN…TPLTGFSSFV (183 aa)) lie on the Cytoplasmic side of the membrane. Residues 2075 to 2098 (STFSKKNGTRSPPRPSPGGLHYSD) are disordered. The PDZ-binding motif lies at 2207–2213 (TGFSSFV).

Belongs to the sidekick family. In terms of assembly, homodimer; mediates homophilic interactions to promote cell adhesion. In terms of tissue distribution, up-regulated in glomeruli in HIV-associated nephropathy. In diseased glomeruli, significantly overexpressed and the expression is no longer restricted to mesangial cells but includes podocytes and parietal epithelial cells.

The protein resides in the cell membrane. It is found in the synapse. Functionally, adhesion molecule that promotes lamina-specific synaptic connections in the retina. Expressed in specific subsets of interneurons and retinal ganglion cells (RGCs) and promotes synaptic connectivity via homophilic interactions. In Homo sapiens (Human), this protein is Protein sidekick-1.